Consider the following 351-residue polypeptide: S-adenosylmethionine:tRNA ribosyltransferase-isomerase (351 aa).

It belongs to the QueA family. In terms of assembly, monomer.

The protein resides in the cytoplasm. It carries out the reaction 7-aminomethyl-7-carbaguanosine(34) in tRNA + S-adenosyl-L-methionine = epoxyqueuosine(34) in tRNA + adenine + L-methionine + 2 H(+). It participates in tRNA modification; tRNA-queuosine biosynthesis. Transfers and isomerizes the ribose moiety from AdoMet to the 7-aminomethyl group of 7-deazaguanine (preQ1-tRNA) to give epoxyqueuosine (oQ-tRNA). The chain is S-adenosylmethionine:tRNA ribosyltransferase-isomerase from Idiomarina loihiensis (strain ATCC BAA-735 / DSM 15497 / L2-TR).